The chain runs to 227 residues: Cytochrome c oxidase subunit 2 (227 aa).

The Mitochondrial intermembrane portion of the chain corresponds to 1-14 (MAYPFQLGLQDATS). A helical transmembrane segment spans residues 15-45 (PIMEELLHFHDHTLMIVFLISSLVLYIISLM). The Mitochondrial matrix segment spans residues 46 to 59 (LTTKLTHTSTMDAQ). Residues 60–87 (EVETVWTILPAIILILIALPSLRILYMM) traverse the membrane as a helical segment. Topologically, residues 88 to 227 (DEINNPSLTV…YFETWSALMV (140 aa)) are mitochondrial intermembrane. Residues histidine 161, cysteine 196, glutamate 198, cysteine 200, histidine 204, and methionine 207 each coordinate Cu cation. Glutamate 198 is a Mg(2+) binding site. Tyrosine 218 carries the phosphotyrosine modification.

This sequence belongs to the cytochrome c oxidase subunit 2 family. Component of the cytochrome c oxidase (complex IV, CIV), a multisubunit enzyme composed of 14 subunits. The complex is composed of a catalytic core of 3 subunits MT-CO1, MT-CO2 and MT-CO3, encoded in the mitochondrial DNA, and 11 supernumerary subunits COX4I, COX5A, COX5B, COX6A, COX6B, COX6C, COX7A, COX7B, COX7C, COX8 and NDUFA4, which are encoded in the nuclear genome. The complex exists as a monomer or a dimer and forms supercomplexes (SCs) in the inner mitochondrial membrane with NADH-ubiquinone oxidoreductase (complex I, CI) and ubiquinol-cytochrome c oxidoreductase (cytochrome b-c1 complex, complex III, CIII), resulting in different assemblies (supercomplex SCI(1)III(2)IV(1) and megacomplex MCI(2)III(2)IV(2)). Found in a complex with TMEM177, COA6, COX18, COX20, SCO1 and SCO2. Interacts with TMEM177 in a COX20-dependent manner. Interacts with COX20. Interacts with COX16. Cu cation serves as cofactor.

It is found in the mitochondrion inner membrane. It catalyses the reaction 4 Fe(II)-[cytochrome c] + O2 + 8 H(+)(in) = 4 Fe(III)-[cytochrome c] + 2 H2O + 4 H(+)(out). Functionally, component of the cytochrome c oxidase, the last enzyme in the mitochondrial electron transport chain which drives oxidative phosphorylation. The respiratory chain contains 3 multisubunit complexes succinate dehydrogenase (complex II, CII), ubiquinol-cytochrome c oxidoreductase (cytochrome b-c1 complex, complex III, CIII) and cytochrome c oxidase (complex IV, CIV), that cooperate to transfer electrons derived from NADH and succinate to molecular oxygen, creating an electrochemical gradient over the inner membrane that drives transmembrane transport and the ATP synthase. Cytochrome c oxidase is the component of the respiratory chain that catalyzes the reduction of oxygen to water. Electrons originating from reduced cytochrome c in the intermembrane space (IMS) are transferred via the dinuclear copper A center (CU(A)) of subunit 2 and heme A of subunit 1 to the active site in subunit 1, a binuclear center (BNC) formed by heme A3 and copper B (CU(B)). The BNC reduces molecular oxygen to 2 water molecules using 4 electrons from cytochrome c in the IMS and 4 protons from the mitochondrial matrix. This chain is Cytochrome c oxidase subunit 2 (MT-CO2), found in Canis mesomelas elongae (Eastern African black-backed jackal).